Reading from the N-terminus, the 564-residue chain is Dihydroxy-acid dehydratase (564 aa).

Residue D80 participates in Mg(2+) binding. C121 is a [2Fe-2S] cluster binding site. Mg(2+) is bound by residues D122 and K123. N6-carboxylysine is present on K123. [2Fe-2S] cluster is bound at residue C194. E447 serves as a coordination point for Mg(2+). S473 serves as the catalytic Proton acceptor.

It belongs to the IlvD/Edd family. As to quaternary structure, homodimer. [2Fe-2S] cluster serves as cofactor. Requires Mg(2+) as cofactor.

It catalyses the reaction (2R)-2,3-dihydroxy-3-methylbutanoate = 3-methyl-2-oxobutanoate + H2O. It carries out the reaction (2R,3R)-2,3-dihydroxy-3-methylpentanoate = (S)-3-methyl-2-oxopentanoate + H2O. The protein operates within amino-acid biosynthesis; L-isoleucine biosynthesis; L-isoleucine from 2-oxobutanoate: step 3/4. Its pathway is amino-acid biosynthesis; L-valine biosynthesis; L-valine from pyruvate: step 3/4. Functions in the biosynthesis of branched-chain amino acids. Catalyzes the dehydration of (2R,3R)-2,3-dihydroxy-3-methylpentanoate (2,3-dihydroxy-3-methylvalerate) into 2-oxo-3-methylpentanoate (2-oxo-3-methylvalerate) and of (2R)-2,3-dihydroxy-3-methylbutanoate (2,3-dihydroxyisovalerate) into 2-oxo-3-methylbutanoate (2-oxoisovalerate), the penultimate precursor to L-isoleucine and L-valine, respectively. The chain is Dihydroxy-acid dehydratase from Listeria innocua serovar 6a (strain ATCC BAA-680 / CLIP 11262).